A 189-amino-acid chain; its full sequence is Sec-independent protein translocase protein TatB (189 aa).

A helical transmembrane segment spans residues 1–21 (MFGVGIFEVLVILIVAVIALG). The tract at residues 152–189 (TQKPQNSIDSINSKESSVDSLHSPSIVESTQSSSSKDS) is disordered. Polar residues predominate over residues 153–189 (QKPQNSIDSINSKESSVDSLHSPSIVESTQSSSSKDS).

The protein belongs to the TatB family. The Tat system comprises two distinct complexes: a TatABC complex, containing multiple copies of TatA, TatB and TatC subunits, and a separate TatA complex, containing only TatA subunits. Substrates initially bind to the TatABC complex, which probably triggers association of the separate TatA complex to form the active translocon.

The protein localises to the cell inner membrane. Part of the twin-arginine translocation (Tat) system that transports large folded proteins containing a characteristic twin-arginine motif in their signal peptide across membranes. Together with TatC, TatB is part of a receptor directly interacting with Tat signal peptides. TatB may form an oligomeric binding site that transiently accommodates folded Tat precursor proteins before their translocation. The protein is Sec-independent protein translocase protein TatB of Helicobacter hepaticus (strain ATCC 51449 / 3B1).